Consider the following 277-residue polypeptide: Orotidine 5'-phosphate decarboxylase (277 aa).

Substrate-binding positions include aspartate 40, 62–64 (KTH), 93–102 (DRKFIDIGNT), tyrosine 229, and arginine 247. The active-site Proton donor is the lysine 95.

This sequence belongs to the OMP decarboxylase family.

The enzyme catalyses orotidine 5'-phosphate + H(+) = UMP + CO2. It participates in pyrimidine metabolism; UMP biosynthesis via de novo pathway; UMP from orotate: step 2/2. The sequence is that of Orotidine 5'-phosphate decarboxylase (pyrG) from Aspergillus oryzae (strain ATCC 42149 / RIB 40) (Yellow koji mold).